A 496-amino-acid chain; its full sequence is MTAQTAEEHSLTAVIGLEVHVQLETDTKIFCGCSTDADDNEEPNTRTCPVCLGLPGALPVLNEGAVEAAVKVGKALSSDIPEETRFHRKNYYYPDLPKNFQITQYDAPICDGGELEFAVDDERRTVAIERAHLEEDPGSLSHAGGSIDTAEHTLVDYNRAGTPLLEIVTAPDFRSAAEVRAFLAKLTEVLEYLGVFDVTRDGSLRVDANLSIVDSDAVGENGSIDEATLEAANRTEVKNISSHKGAEKALAYEETRQKNAVQRGREVEQETRHWDESRGITVSMRSKEEEKDYRYFREADIPPLRVSDWKEKIDIPELPDARRERFREEYGLDAETASKLTSTKQVADFYERVADTFAPELAATWVADNLLGELNYRDMEITDIEGRLDEFAHLIELVDEDEITVKNAEEVVLRRMLDDGQPPGDIVEAEDLGKTDDDAVAAAVTAAIEENPDAVEDYHAGEDGALNFLVGQVMQETGGSADPGTVNELLRAELDG.

This sequence belongs to the GatB/GatE family. GatB subfamily. In terms of assembly, heterotrimer of A, B and C subunits.

It carries out the reaction L-glutamyl-tRNA(Gln) + L-glutamine + ATP + H2O = L-glutaminyl-tRNA(Gln) + L-glutamate + ADP + phosphate + H(+). It catalyses the reaction L-aspartyl-tRNA(Asn) + L-glutamine + ATP + H2O = L-asparaginyl-tRNA(Asn) + L-glutamate + ADP + phosphate + 2 H(+). In terms of biological role, allows the formation of correctly charged Asn-tRNA(Asn) or Gln-tRNA(Gln) through the transamidation of misacylated Asp-tRNA(Asn) or Glu-tRNA(Gln) in organisms which lack either or both of asparaginyl-tRNA or glutaminyl-tRNA synthetases. The reaction takes place in the presence of glutamine and ATP through an activated phospho-Asp-tRNA(Asn) or phospho-Glu-tRNA(Gln). The protein is Aspartyl/glutamyl-tRNA(Asn/Gln) amidotransferase subunit B of Natronomonas pharaonis (strain ATCC 35678 / DSM 2160 / CIP 103997 / JCM 8858 / NBRC 14720 / NCIMB 2260 / Gabara) (Halobacterium pharaonis).